Consider the following 380-residue polypeptide: O-phospho-L-seryl-tRNA:Cys-tRNA synthase (380 aa).

Pyridoxal 5'-phosphate-binding positions include 86–87 (AR), Asn-192, and 215–217 (SGH). Lys-218 bears the N6-(pyridoxal phosphate)lysine mark.

The protein belongs to the SepCysS family. As to quaternary structure, homodimer. Interacts with SepRS. Pyridoxal 5'-phosphate serves as cofactor.

It carries out the reaction O-phospho-L-seryl-tRNA(Cys) + hydrogen sulfide + H(+) = L-cysteinyl-tRNA(Cys) + phosphate. In terms of biological role, converts O-phospho-L-seryl-tRNA(Cys) (Sep-tRNA(Cys)) to L-cysteinyl-tRNA(Cys) (Cys-tRNA(Cys)). In Methanococcus maripaludis (strain C5 / ATCC BAA-1333), this protein is O-phospho-L-seryl-tRNA:Cys-tRNA synthase.